Reading from the N-terminus, the 58-residue chain is Short neurotoxin MS11 (58 aa).

Disulfide bonds link Cys3–Cys20, Cys13–Cys38, Cys42–Cys50, and Cys51–Cys56.

The protein belongs to the three-finger toxin family. Short-chain subfamily. In terms of tissue distribution, expressed by the venom gland.

It is found in the secreted. In terms of biological role, produces peripheral paralysis by blocking neuromuscular transmission at the postsynaptic site. Binds to and inhibits the endogenous nicotinic acetylcholine receptors (nAChR) in the human rhabdomyosarcoma TE 671 cell line with an IC(50) of 266 mM. Not toxic to mice by intraperitoneal injection or to zebrafish by injection at the back dorsolateral region. This chain is Short neurotoxin MS11, found in Micrurus surinamensis (Surinam coral snake).